The following is a 117-amino-acid chain: Large ribosomal subunit protein bL20 (117 aa).

The protein belongs to the bacterial ribosomal protein bL20 family.

Binds directly to 23S ribosomal RNA and is necessary for the in vitro assembly process of the 50S ribosomal subunit. It is not involved in the protein synthesizing functions of that subunit. This is Large ribosomal subunit protein bL20 from Glaesserella parasuis serovar 5 (strain SH0165) (Haemophilus parasuis).